The chain runs to 433 residues: Enolase (433 aa).

Residue Gln-167 participates in (2R)-2-phosphoglycerate binding. The active-site Proton donor is the Glu-209. Residues Asp-246, Glu-291, and Asp-318 each contribute to the Mg(2+) site. Lys-343, Arg-372, Ser-373, and Lys-394 together coordinate (2R)-2-phosphoglycerate. Catalysis depends on Lys-343, which acts as the Proton acceptor.

This sequence belongs to the enolase family. In terms of assembly, component of the RNA degradosome, a multiprotein complex involved in RNA processing and mRNA degradation. It depends on Mg(2+) as a cofactor.

The protein resides in the cytoplasm. It localises to the secreted. It is found in the cell surface. It carries out the reaction (2R)-2-phosphoglycerate = phosphoenolpyruvate + H2O. The protein operates within carbohydrate degradation; glycolysis; pyruvate from D-glyceraldehyde 3-phosphate: step 4/5. Functionally, catalyzes the reversible conversion of 2-phosphoglycerate (2-PG) into phosphoenolpyruvate (PEP). It is essential for the degradation of carbohydrates via glycolysis. This chain is Enolase, found in Photobacterium profundum (strain SS9).